The sequence spans 113 residues: Large ribosomal subunit protein eL31 (113 aa).

The protein belongs to the eukaryotic ribosomal protein eL31 family. In terms of assembly, component of the large ribosomal subunit (LSU). Mature yeast ribosomes consist of a small (40S) and a large (60S) subunit. The 40S small subunit contains 1 molecule of ribosomal RNA (18S rRNA) and at least 33 different proteins. The large 60S subunit contains 3 rRNA molecules (25S, 5.8S and 5S rRNA) and at least 46 different proteins.

It is found in the cytoplasm. Component of the ribosome, a large ribonucleoprotein complex responsible for the synthesis of proteins in the cell. The small ribosomal subunit (SSU) binds messenger RNAs (mRNAs) and translates the encoded message by selecting cognate aminoacyl-transfer RNA (tRNA) molecules. The large subunit (LSU) contains the ribosomal catalytic site termed the peptidyl transferase center (PTC), which catalyzes the formation of peptide bonds, thereby polymerizing the amino acids delivered by tRNAs into a polypeptide chain. The nascent polypeptides leave the ribosome through a tunnel in the LSU and interact with protein factors that function in enzymatic processing, targeting, and the membrane insertion of nascent chains at the exit of the ribosomal tunnel. This Schizosaccharomyces pombe (strain 972 / ATCC 24843) (Fission yeast) protein is Large ribosomal subunit protein eL31 (rpl31).